Consider the following 280-residue polypeptide: Undecaprenyl-diphosphatase (280 aa).

8 consecutive transmembrane segments (helical) span residues 3 to 23 (IILL…EFLP), 45 to 65 (VDLF…YDYW), 88 to 108 (QLGL…FTFA), 115 to 135 (LFNP…IFYV), 150 to 170 (VSLK…IPGT), 191 to 211 (AEFS…LDFI), 225 to 245 (VLGI…RLLV), and 255 to 275 (IFAW…WGFG).

It belongs to the UppP family.

Its subcellular location is the cell inner membrane. The catalysed reaction is di-trans,octa-cis-undecaprenyl diphosphate + H2O = di-trans,octa-cis-undecaprenyl phosphate + phosphate + H(+). Functionally, catalyzes the dephosphorylation of undecaprenyl diphosphate (UPP). Confers resistance to bacitracin. The sequence is that of Undecaprenyl-diphosphatase from Psychrobacter cryohalolentis (strain ATCC BAA-1226 / DSM 17306 / VKM B-2378 / K5).